The sequence spans 562 residues: IRK-interacting protein (562 aa).

2 disordered regions span residues 29 to 61 (ASLMQMKSSPSSNYSLRNPSSSSAASPASRPLP) and 303 to 322 (VVSQENSGGRSSGKKNSEMP). The span at 36–61 (SSPSSNYSLRNPSSSSAASPASRPLP) shows a compositional bias: low complexity. Residues 246–306 (SGVEKLKREL…LREATEVVSQ (61 aa)) are a coiled coil.

Interacts with IRK. In terms of tissue distribution, highly expressed in root tips, shoot apices and developing flowers.

This Arabidopsis thaliana (Mouse-ear cress) protein is IRK-interacting protein.